The following is a 105-amino-acid chain: Large ribosomal subunit protein bL21 (105 aa).

Belongs to the bacterial ribosomal protein bL21 family. In terms of assembly, part of the 50S ribosomal subunit. Contacts protein L20.

In terms of biological role, this protein binds to 23S rRNA in the presence of protein L20. This Phocaeicola vulgatus (strain ATCC 8482 / DSM 1447 / JCM 5826 / CCUG 4940 / NBRC 14291 / NCTC 11154) (Bacteroides vulgatus) protein is Large ribosomal subunit protein bL21.